We begin with the raw amino-acid sequence, 158 residues long: U4/U6.U5 small nuclear ribonucleoprotein 27 kDa protein (158 aa).

A disordered region spans residues 1–102 (MGRSRSRSPE…AEDLEGKTEE (102 aa)). Residues 13–59 (RERRRSRSASRERERRRRERSRSRERRRSRSRSPHRRRSRSPRRHRS) show a composition bias toward basic residues. The segment covering 66-101 (RLKDRRDDDKKEPKESKGGGSKERQLAAEDLEGKTE) has biased composition (basic and acidic residues).

Belongs to the SNUT3 family. Part of a tri-snRNP complex.

It is found in the nucleus. May play a role in mRNA splicing. This is U4/U6.U5 small nuclear ribonucleoprotein 27 kDa protein (snrnp27) from Xenopus laevis (African clawed frog).